The following is a 94-amino-acid chain: Large ribosomal subunit protein bL31 (94 aa).

The interval 65–94 is disordered; the sequence is YGMADSENDSTDKKKTTNEKKVSDSPSKES. Positions 74-94 are enriched in basic and acidic residues; the sequence is STDKKKTTNEKKVSDSPSKES.

It belongs to the bacterial ribosomal protein bL31 family. Type A subfamily. Part of the 50S ribosomal subunit.

Functionally, binds the 23S rRNA. The chain is Large ribosomal subunit protein bL31 from Prochlorococcus marinus (strain MIT 9211).